A 277-amino-acid chain; its full sequence is F41 fimbrial protein (277 aa).

An N-terminal signal peptide occupies residues 1-22 (MKKTLIALAVAASAAVSGSVMA).

The protein belongs to the fimbrial K88 protein family.

Its subcellular location is the fimbrium. Fimbriae (also called pili), polar filaments radiating from the surface of the bacterium to a length of 0.5-1.5 micrometers and numbering 100-300 per cell, enable bacteria to colonize the epithelium of specific host organs. This chain is F41 fimbrial protein (FimF41a), found in Escherichia coli.